The following is a 195-amino-acid chain: Cysteine/O-acetylserine efflux protein (195 aa).

At M1 to S7 the chain is on the periplasmic side. A helical membrane pass occupies residues A8 to L28. Over S29–M46 the chain is Cytoplasmic. The chain crosses the membrane as a helical span at residues S47–I67. The Periplasmic portion of the chain corresponds to D68–P69. A helical transmembrane segment spans residues A70–I90. Residues A91–P104 are Cytoplasmic-facing. Residues I105–V125 form a helical membrane-spanning segment. Over T126–W141 the chain is Periplasmic. The chain crosses the membrane as a helical span at residues I142–L162. Over A163 to R176 the chain is Cytoplasmic. The chain crosses the membrane as a helical span at residues Q177–F194. Residue Y195 is a topological domain, periplasmic.

Belongs to the Rht family.

It is found in the cell inner membrane. The enzyme catalyses O-acetyl-L-serine(in) = O-acetyl-L-serine(out). It carries out the reaction L-cysteine(in) = L-cysteine(out). Functionally, exporter of O-acetylserine (OAS) and cysteine. This chain is Cysteine/O-acetylserine efflux protein (eamB), found in Escherichia coli O157:H7.